Consider the following 310-residue polypeptide: ADP-L-glycero-D-manno-heptose-6-epimerase (310 aa).

NADP(+) is bound by residues 10–11, 31–32, K38, K53, 75–79, and N92; these read FI, DN, and EGACS. The active-site Proton acceptor is Y140. NADP(+) is bound at residue K144. N169 contributes to the substrate binding site. Residues V170 and K178 each coordinate NADP(+). Residue K178 is the Proton acceptor of the active site. Residues S180, H187, 201–204, R209, and Y272 contribute to the substrate site; that span reads FEGS.

It belongs to the NAD(P)-dependent epimerase/dehydratase family. HldD subfamily. In terms of assembly, homopentamer. The cofactor is NADP(+).

The catalysed reaction is ADP-D-glycero-beta-D-manno-heptose = ADP-L-glycero-beta-D-manno-heptose. It functions in the pathway nucleotide-sugar biosynthesis; ADP-L-glycero-beta-D-manno-heptose biosynthesis; ADP-L-glycero-beta-D-manno-heptose from D-glycero-beta-D-manno-heptose 7-phosphate: step 4/4. Catalyzes the interconversion between ADP-D-glycero-beta-D-manno-heptose and ADP-L-glycero-beta-D-manno-heptose via an epimerization at carbon 6 of the heptose. This is ADP-L-glycero-D-manno-heptose-6-epimerase from Klebsiella pneumoniae subsp. pneumoniae (strain ATCC 700721 / MGH 78578).